The primary structure comprises 369 residues: 3 beta-hydroxysteroid dehydrogenase type 7 (369 aa).

Tyrosine 159 serves as the catalytic Proton acceptor. Lysine 163 contacts NAD(+). Helical transmembrane passes span 289 to 309 (LLPY…QWLL) and 312 to 334 (LVLY…FTVS).

It belongs to the 3-beta-HSD family. Predominantly expressed in liver.

It localises to the endoplasmic reticulum membrane. The catalysed reaction is 7alpha-hydroxycholesterol + NAD(+) = 7alpha-hydroxycholest-4-en-3-one + NADH + H(+). It catalyses the reaction 7alpha,25-dihydroxycholesterol + NAD(+) = 7alpha,25-dihydroxy-4-cholesten-3-one + NADH + H(+). It carries out the reaction (25R)-cholest-5-en-3beta,7alpha,26-triol + NAD(+) = (25R)-7alpha,26-dihydroxycholest-4-en-3-one + NADH + H(+). The enzyme catalyses (24S)-7alpha-dihydroxycholesterol + NAD(+) = (24S)-7alpha,24-dihydroxycholest-4-en-3-one + NADH + H(+). It participates in lipid metabolism; steroid biosynthesis. In terms of biological role, the 3-beta-HSD enzymatic system plays a crucial role in the biosynthesis of all classes of hormonal steroids. HSD VII is active against four 7-alpha-hydroxylated sterols. Does not metabolize several different C(19/21) steroids as substrates. Involved in bile acid synthesis. Plays a key role in cell positioning and movement in lymphoid tissues by mediating degradation of 7-alpha,25-dihydroxycholesterol (7-alpha,25-OHC): 7-alpha,25-OHC acts as a ligand for the G protein-coupled receptor GPR183/EBI2, a chemotactic receptor for a number of lymphoid cells. This chain is 3 beta-hydroxysteroid dehydrogenase type 7, found in Mus musculus (Mouse).